The following is a 208-amino-acid chain: MMRKLSPGSKIVLASHNAGKLREFSTLLAESGITVISAAELDLPEPEETEETFTGNAAIKALAAARASGLPALADDSGFCVSALDNRPGVYSARWGGPTKDMQVAMERVHREMGDNPDQRAFFVAALCLAWPDGETRTVQGECHGTVVWPPRGDHGHGYDPMFVPEGESRTFAEMSEAEKNAVSHRGRALTAFLNTCLDTSTQKTERK.

15–20 contributes to the substrate binding site; that stretch reads SHNAGK. 2 residues coordinate Mg(2+): Glu-47 and Asp-76. The active-site Proton acceptor is Asp-76. Substrate is bound by residues Ser-77, 157-160, Lys-180, and 185-186; these read HGYD and HR.

Belongs to the HAM1 NTPase family. In terms of assembly, homodimer. Requires Mg(2+) as cofactor.

It catalyses the reaction XTP + H2O = XMP + diphosphate + H(+). The catalysed reaction is dITP + H2O = dIMP + diphosphate + H(+). It carries out the reaction ITP + H2O = IMP + diphosphate + H(+). Functionally, pyrophosphatase that catalyzes the hydrolysis of nucleoside triphosphates to their monophosphate derivatives, with a high preference for the non-canonical purine nucleotides XTP (xanthosine triphosphate), dITP (deoxyinosine triphosphate) and ITP. Seems to function as a house-cleaning enzyme that removes non-canonical purine nucleotides from the nucleotide pool, thus preventing their incorporation into DNA/RNA and avoiding chromosomal lesions. This chain is dITP/XTP pyrophosphatase, found in Gluconobacter oxydans (strain 621H) (Gluconobacter suboxydans).